Here is a 486-residue protein sequence, read N- to C-terminus: UDP-N-acetylmuramoyl-L-alanyl-D-glutamate--2,6-diaminopimelate ligase (486 aa).

Residue serine 31 participates in UDP-N-acetyl-alpha-D-muramoyl-L-alanyl-D-glutamate binding. 109 to 115 (GTNGKTT) contributes to the ATP binding site. Residues asparagine 150, 151 to 152 (TT), serine 178, and arginine 186 each bind UDP-N-acetyl-alpha-D-muramoyl-L-alanyl-D-glutamate. The residue at position 218 (lysine 218) is an N6-carboxylysine. Residues arginine 381, 405 to 408 (DNPR), glycine 455, and glutamate 459 contribute to the meso-2,6-diaminopimelate site. A Meso-diaminopimelate recognition motif motif is present at residues 405–408 (DNPR).

It belongs to the MurCDEF family. MurE subfamily. Mg(2+) is required as a cofactor. Post-translationally, carboxylation is probably crucial for Mg(2+) binding and, consequently, for the gamma-phosphate positioning of ATP.

Its subcellular location is the cytoplasm. It carries out the reaction UDP-N-acetyl-alpha-D-muramoyl-L-alanyl-D-glutamate + meso-2,6-diaminopimelate + ATP = UDP-N-acetyl-alpha-D-muramoyl-L-alanyl-gamma-D-glutamyl-meso-2,6-diaminopimelate + ADP + phosphate + H(+). Its pathway is cell wall biogenesis; peptidoglycan biosynthesis. Catalyzes the addition of meso-diaminopimelic acid to the nucleotide precursor UDP-N-acetylmuramoyl-L-alanyl-D-glutamate (UMAG) in the biosynthesis of bacterial cell-wall peptidoglycan. The chain is UDP-N-acetylmuramoyl-L-alanyl-D-glutamate--2,6-diaminopimelate ligase from Halalkalibacterium halodurans (strain ATCC BAA-125 / DSM 18197 / FERM 7344 / JCM 9153 / C-125) (Bacillus halodurans).